Reading from the N-terminus, the 49-residue chain is Thymopoietin-1 (49 aa).

Residues leucine 4 to leucine 47 enclose the LEM-like domain. The tract at residues arginine 32 to tyrosine 36 is biological activity.

The protein belongs to the thymopoietin family.

Hormone of the thymus with pleiotropic actions on prothymocytes, mature T-cells, the nicotinic acetylcholine receptor, and pituitary corticotrophs. The chain is Thymopoietin-1 from Bos taurus (Bovine).